The following is a 237-amino-acid chain: Phosphoribosylaminoimidazole-succinocarboxamide synthase (237 aa).

The protein belongs to the SAICAR synthetase family.

The catalysed reaction is 5-amino-1-(5-phospho-D-ribosyl)imidazole-4-carboxylate + L-aspartate + ATP = (2S)-2-[5-amino-1-(5-phospho-beta-D-ribosyl)imidazole-4-carboxamido]succinate + ADP + phosphate + 2 H(+). It functions in the pathway purine metabolism; IMP biosynthesis via de novo pathway; 5-amino-1-(5-phospho-D-ribosyl)imidazole-4-carboxamide from 5-amino-1-(5-phospho-D-ribosyl)imidazole-4-carboxylate: step 1/2. The polypeptide is Phosphoribosylaminoimidazole-succinocarboxamide synthase (Photorhabdus laumondii subsp. laumondii (strain DSM 15139 / CIP 105565 / TT01) (Photorhabdus luminescens subsp. laumondii)).